The chain runs to 455 residues: Serine incorporator 2 (455 aa).

A run of 11 helical transmembrane segments spans residues 5–27, 40–57, 96–118, 131–150, 160–182, 202–224, 239–256, 268–290, 317–339, 385–407, and 422–444; these read LGAC…ILCS, LIFT…IIML, AVYR…MLCV, GFWF…AFYI, FYFG…IDFA, YAGL…ALMF, FISL…AAVL, LLQA…SSIP, QWWD…FISL, TYSY…MTLT, and WTAV…WTLV.

Belongs to the TDE1 family.

The protein resides in the cell membrane. It carries out the reaction a 1,2-diacyl-sn-glycero-3-phospho-L-serine(in) = a 1,2-diacyl-sn-glycero-3-phospho-L-serine(out). It catalyses the reaction a 1,2-diacyl-sn-glycero-3-phosphocholine(in) = a 1,2-diacyl-sn-glycero-3-phosphocholine(out). The enzyme catalyses a 1,2-diacyl-sn-glycero-3-phosphoethanolamine(in) = a 1,2-diacyl-sn-glycero-3-phosphoethanolamine(out). Its function is as follows. Non-ATP-dependent, non-specific lipid transporter for phosphatidylserine, phosphatidylcholine, and phosphatidylethanolamine. Functions as a scramblase that flips lipids in both directions across the membrane. In contrast to SERINC3 and SERINC5, has no effect on HIV-1 particles infectivity. The sequence is that of Serine incorporator 2 from Homo sapiens (Human).